The chain runs to 133 residues: Small ribosomal subunit protein uS8 (133 aa).

This sequence belongs to the universal ribosomal protein uS8 family. Part of the 30S ribosomal subunit. Contacts proteins S5 and S12.

In terms of biological role, one of the primary rRNA binding proteins, it binds directly to 16S rRNA central domain where it helps coordinate assembly of the platform of the 30S subunit. This Prochlorococcus marinus (strain MIT 9303) protein is Small ribosomal subunit protein uS8.